The following is a 97-amino-acid chain: Large ribosomal subunit protein bL27 (97 aa).

A disordered region spans residues 1–21 (MAHKKGVGSSRNGRDSNPKYR).

This sequence belongs to the bacterial ribosomal protein bL27 family.

The polypeptide is Large ribosomal subunit protein bL27 (Gemmatimonas aurantiaca (strain DSM 14586 / JCM 11422 / NBRC 100505 / T-27)).